The primary structure comprises 232 residues: MAKNDIWTPLESNPDSLYLYSCKLGQSKLKFVDIYGFNNDLLDMIPQPVQAVIFLYPVNDNIVSENNTNDKHNLKENFDNVWFIKQYIPNSCGTIALLHLYGNLRNKFELDKDSVLDDFFNKVNEMSAEKRGQELKNNKSIENLHHEFCGQVENRDDILDVDTHFIVFVQIEGKIIELDGRKDHPTVHCFTNGDNFLYDTGKIIQDKFIEKCKDDLRFSALAVIPNDNFDII.

The 220-residue stretch at 6 to 225 (IWTPLESNPD…LRFSALAVIP (220 aa)) folds into the UCH catalytic domain. Residues 10 to 14 (LESNP) form an interaction with ubiquitin region. Cys-92 serves as the catalytic Nucleophile. Residues 151-159 (QVENRDDIL) are crossover loop which restricts access of large ubiquitin adducts to the active site. The interaction with ubiquitin stretch occupies residues 163–165 (THF). His-164 (proton donor) is an active-site residue.

Belongs to the peptidase C12 family.

The enzyme catalyses Thiol-dependent hydrolysis of ester, thioester, amide, peptide and isopeptide bonds formed by the C-terminal Gly of ubiquitin (a 76-residue protein attached to proteins as an intracellular targeting signal).. Its function is as follows. Thiol protease that recognizes and hydrolyzes a peptide bond at the C-terminal glycine of either ubiquitin or NEDD8. Essential for parasite blood stage survival. This is Ubiquitin carboxyl-terminal hydrolase UCHL3 from Plasmodium falciparum (isolate 3D7).